Reading from the N-terminus, the 360-residue chain is D-alanine--D-alanine ligase (360 aa).

The region spanning 146–352 (KICAEHAGLH…FSQLIDRLLQ (207 aa)) is the ATP-grasp domain. 179–234 (LEEFTLPFFVKPASQGSSIGITKVHRPEELAAALEKAFMVDTKVLIEKTIEGREIE) contributes to the ATP binding site. Aspartate 305, glutamate 319, and asparagine 321 together coordinate Mg(2+).

Belongs to the D-alanine--D-alanine ligase family. Mg(2+) serves as cofactor. It depends on Mn(2+) as a cofactor.

It is found in the cytoplasm. The catalysed reaction is 2 D-alanine + ATP = D-alanyl-D-alanine + ADP + phosphate + H(+). It functions in the pathway cell wall biogenesis; peptidoglycan biosynthesis. Cell wall formation. In Prosthecochloris aestuarii (strain DSM 271 / SK 413), this protein is D-alanine--D-alanine ligase.